The following is a 173-amino-acid chain: MTTILVTGYKNFELGIFQDKDPKITIIKKAIKRDFIHFLEEGVDWFVFMGNLGFEYWALEVALSLQTEYDMQLATIFPFENHGEHWSEANQEKLFKFKQTDFVKSSYKRYQNSYQFKKYNQFLLDNTDRAYLFYDKDKETNLKYLYQMMTAKDNYPVSLLTFEDLDDIVQDFD.

This sequence belongs to the UPF0398 family.

The sequence is that of UPF0398 protein SMU_470 from Streptococcus mutans serotype c (strain ATCC 700610 / UA159).